The chain runs to 59 residues: Large ribosomal subunit protein uL30 (59 aa).

Belongs to the universal ribosomal protein uL30 family. In terms of assembly, part of the 50S ribosomal subunit.

The chain is Large ribosomal subunit protein uL30 from Proteus mirabilis (strain HI4320).